A 231-amino-acid chain; its full sequence is Octanoyltransferase (231 aa).

The region spanning 49-224 (ADTPDEIWLL…ALQRLLPPVY (176 aa)) is the BPL/LPL catalytic domain. Residues 88–95 (RGGQITYH), 155–157 (ALG), and 168–170 (GLA) each bind substrate. Cysteine 186 (acyl-thioester intermediate) is an active-site residue.

This sequence belongs to the LipB family.

It localises to the cytoplasm. It catalyses the reaction octanoyl-[ACP] + L-lysyl-[protein] = N(6)-octanoyl-L-lysyl-[protein] + holo-[ACP] + H(+). The protein operates within protein modification; protein lipoylation via endogenous pathway; protein N(6)-(lipoyl)lysine from octanoyl-[acyl-carrier-protein]: step 1/2. In terms of biological role, catalyzes the transfer of endogenously produced octanoic acid from octanoyl-acyl-carrier-protein onto the lipoyl domains of lipoate-dependent enzymes. Lipoyl-ACP can also act as a substrate although octanoyl-ACP is likely to be the physiological substrate. This chain is Octanoyltransferase, found in Aromatoleum aromaticum (strain DSM 19018 / LMG 30748 / EbN1) (Azoarcus sp. (strain EbN1)).